Here is an 85-residue protein sequence, read N- to C-terminus: RDS3 complex subunit 10 (85 aa).

Belongs to the SF3b complex composed of CUS1, HSH49, HSH155, RCP1, RDS3 and RSE1.

It localises to the nucleus. Involved in pre-mRNA splicing. Required for the SF3b integrity and prespliceosome assembly. This Saccharomyces cerevisiae (strain ATCC 204508 / S288c) (Baker's yeast) protein is RDS3 complex subunit 10 (YSF3).